The chain runs to 672 residues: UvrABC system protein B (672 aa).

A Helicase ATP-binding domain is found at 26 to 183 (EGLEDGLAHQ…RRLSELQYVR (158 aa)). 39–46 (GVTGSGKT) lines the ATP pocket. The Beta-hairpin motif lies at 92 to 115 (YYDYYQPEAYVPSSDTFIEKDASV). The 167-residue stretch at 431 to 597 (QVDDLLSEIN…ALNKKVTDIL (167 aa)) folds into the Helicase C-terminal domain. The interval 601 to 623 (DGPVRSRTKGARGQRAAEPHPDY) is disordered. Positions 632–667 (EQQIQRLETQMYQHAQNLEFEQAAALRDEIHILREQ) constitute a UVR domain.

The protein belongs to the UvrB family. Forms a heterotetramer with UvrA during the search for lesions. Interacts with UvrC in an incision complex.

The protein localises to the cytoplasm. Functionally, the UvrABC repair system catalyzes the recognition and processing of DNA lesions. A damage recognition complex composed of 2 UvrA and 2 UvrB subunits scans DNA for abnormalities. Upon binding of the UvrA(2)B(2) complex to a putative damaged site, the DNA wraps around one UvrB monomer. DNA wrap is dependent on ATP binding by UvrB and probably causes local melting of the DNA helix, facilitating insertion of UvrB beta-hairpin between the DNA strands. Then UvrB probes one DNA strand for the presence of a lesion. If a lesion is found the UvrA subunits dissociate and the UvrB-DNA preincision complex is formed. This complex is subsequently bound by UvrC and the second UvrB is released. If no lesion is found, the DNA wraps around the other UvrB subunit that will check the other stand for damage. The polypeptide is UvrABC system protein B (Edwardsiella ictaluri (strain 93-146)).